Reading from the N-terminus, the 497-residue chain is Zinc finger CCCH domain-containing protein 22 (497 aa).

The segment at 136–163 adopts a C3H1-type zinc-finger fold; it reads SESMMICKFFMQQRCRFGSSCRSSHGLD. The disordered stretch occupies residues 236 to 281; the sequence is AQMTDDDGEEEEEEDEQQSASDSEDSVSSDYDEGSPQGIGFLESTN. The span at 239 to 268 shows a compositional bias: acidic residues; sequence TDDDGEEEEEEDEQQSASDSEDSVSSDYDE. Positions 300-346 constitute a G-patch domain; the sequence is TRGIASKMMASMGYREGMGLGVSGQGILNPILVKVLPAKRSLDYALE. Positions 352-387 are disordered; the sequence is ECKSEKQKKKRSRGGKRKRGKKFAEAAKAAKQEEES. A compositionally biased stretch (basic residues) spans 357-372; it reads KQKKKRSRGGKRKRGK. Over residues 373-387 the composition is skewed to basic and acidic residues; that stretch reads KFAEAAKAAKQEEES.

This is Zinc finger CCCH domain-containing protein 22 from Arabidopsis thaliana (Mouse-ear cress).